Here is a 473-residue protein sequence, read N- to C-terminus: Ribulose bisphosphate carboxylase large chain (473 aa).

Residues Asn-116 and Thr-166 each coordinate substrate. Lys-168 acts as the Proton acceptor in catalysis. Residue Lys-170 coordinates substrate. Mg(2+) contacts are provided by Lys-194, Asp-196, and Glu-197. Lys-194 is subject to N6-carboxylysine. His-287 serves as the catalytic Proton acceptor. Substrate contacts are provided by Arg-288, His-320, and Ser-372.

The protein belongs to the RuBisCO large chain family. Type I subfamily. As to quaternary structure, heterohexadecamer of 8 large chains and 8 small chains. In R.sphaeroides the complex is approximately 500 kDa. It depends on Mg(2+) as a cofactor.

It carries out the reaction 2 (2R)-3-phosphoglycerate + 2 H(+) = D-ribulose 1,5-bisphosphate + CO2 + H2O. The catalysed reaction is D-ribulose 1,5-bisphosphate + O2 = 2-phosphoglycolate + (2R)-3-phosphoglycerate + 2 H(+). Functionally, ruBisCO catalyzes two reactions: the carboxylation of D-ribulose 1,5-bisphosphate, the primary event in carbon dioxide fixation, as well as the oxidative fragmentation of the pentose substrate. Both reactions occur simultaneously and in competition at the same active site. The chain is Ribulose bisphosphate carboxylase large chain from Thiobacillus denitrificans (strain ATCC 25259 / T1).